The following is a 290-amino-acid chain: Homeobox protein EMX1 (290 aa).

The segment at residues 192 to 251 (PKRIRTAFSPSQLLRLERAFEKNHYVVGAERKQLAGSLSLSETQVKVWFQNRRTKYKRQK) is a DNA-binding region (homeobox). The segment at 249–290 (RQKLEEEGPESEQKKKGSHHINRWRIATKQANGEDIDVTSND) is disordered. Residues 250 to 263 (QKLEEEGPESEQKK) are compositionally biased toward basic and acidic residues.

This sequence belongs to the EMX homeobox family. As to quaternary structure, interacts with WRD11 (via the N-terminal and the central portion of the protein); the interaction associates EMX1 with GLI3. Cerebral cortex.

The protein localises to the nucleus. Its subcellular location is the cytoplasm. Functionally, transcription factor, which in cooperation with EMX2, acts to generate the boundary between the roof and archipallium in the developing brain. May function in combinations with OTX1/2 to specify cell fates in the developing central nervous system. This Homo sapiens (Human) protein is Homeobox protein EMX1.